A 63-amino-acid polypeptide reads, in one-letter code: uncharacterized protein (63 aa).

This is an uncharacterized protein from Thermoproteus tenax (TTV1).